An 842-amino-acid polypeptide reads, in one-letter code: ATP-binding cassette sub-family B member 6 (842 aa).

Residues 1 to 26 (MVTVGNYCETEGPAGPAWTQNGLSPC) are Lumenal-facing. The tract at residues 1 to 205 (MVTVGNYCET…SGGLFILGLW (205 aa)) is required for the lysosomal targeting. The segment at 1–236 (MVTVGNYCET…GNQGRSTDRR (236 aa)) is required for ATPase activity. Residues cysteine 8 and cysteine 26 are joined by a disulfide bond. Residues 27 to 47 (FFFTLVPSTLLTLGVLALVLV) traverse the membrane as a helical segment. The Cytoplasmic segment spans residues 48–72 (LPRRRREVPAGPEELSWAAGPRVAP). A helical membrane pass occupies residues 73-93 (YVLQLFLATLQMALPLAGLAG). Topologically, residues 94–106 (RVGTARGVRLPGY) are lumenal. A helical membrane pass occupies residues 107–127 (LLLASVLESLASVCGLWLLVV). Topologically, residues 128-147 (ERSQARQSLAMGVWMKFRHS) are cytoplasmic. Residues 148 to 168 (LGLLLLWTVTFAAENLALVSW) form a helical membrane-spanning segment. Residues 169–185 (NSPQWWWARADLGQQVQ) lie on the Lumenal side of the membrane. The helical transmembrane segment at 186–206 (FGLWVLRYVTSGGLFILGLWA) threads the bilayer. Topologically, residues 207–263 (PGLRPQSYTLHVHEEDQDVGGNQGRSTDRRSTWRDLGRKLRLLSSYLWPRGSPSLQL) are cytoplasmic. Residues 264-284 (IVLICLGLMGLERALNVLVPI) form a helical membrane-spanning segment. The ABC transmembrane type-1 domain occupies 265-556 (VLICLGLMGL…FGTYYRMIQT (292 aa)). Residues 285–291 (FYRDIVN) lie on the Lumenal side of the membrane. Residues 292 to 312 (LLTAKAPWSSLAWTVTTYVFL) traverse the membrane as a helical segment. At 313–375 (KFLQGGGTGS…TGEVLRIVDR (63 aa)) the chain is on the cytoplasmic side. The chain crosses the membrane as a helical span at residues 376–396 (GTSSVTGLLSYLVFSIIPTLA). A topological domain (lumenal) is located at residue aspartate 397. Residues 398-418 (IIIGIIYFSMFFNAWFGLIVF) traverse the membrane as a helical segment. At 419–499 (LCMSLYLILT…STASLVVLNQ (81 aa)) the chain is on the cytoplasmic side. A helical transmembrane segment spans residues 500–520 (TQNLVIGLGLLAGSLLCAYFV). The Lumenal portion of the chain corresponds to 521–529 (SEQKLQVGD). The chain crosses the membrane as a helical span at residues 530–550 (FVLFGTYITQLYMPLNWFGTY). The Cytoplasmic portion of the chain corresponds to 551–842 (YRMIQTNFID…PEESKPQDTA (292 aa)). One can recognise an ABC transporter domain in the interval 590-824 (IEFENVHFSY…GGVYAEMWQL (235 aa)). ATP-binding positions include tyrosine 599 and 623 to 634 (GPSGAGKSTILR).

Belongs to the ABC transporter superfamily. ABCB family. Heavy Metal importer (TC 3.A.1.210) subfamily. In terms of assembly, homodimer. N-glycosylated.

It is found in the cell membrane. The protein resides in the mitochondrion outer membrane. It localises to the endoplasmic reticulum membrane. Its subcellular location is the golgi apparatus membrane. The protein localises to the endosome membrane. It is found in the lysosome membrane. The protein resides in the late endosome membrane. It localises to the early endosome membrane. Its subcellular location is the secreted. The protein localises to the extracellular exosome. It is found in the mitochondrion. The protein resides in the endosome. It localises to the multivesicular body membrane. Its subcellular location is the melanosome membrane. It catalyses the reaction coproporphyrin III(in) + ATP + H2O = coproporphyrin III(out) + ADP + phosphate + H(+). It carries out the reaction coproporphyrinogen III(in) + ATP + H2O = coproporphyrinogen III(out) + ADP + phosphate + H(+). The enzyme catalyses heme b(in) + ATP + H2O = heme b(out) + ADP + phosphate + H(+). The catalysed reaction is pheophorbide a(in) + ATP + H2O = pheophorbide a(out) + ADP + phosphate + H(+). It catalyses the reaction protoporphyrin IX(in) + ATP + H2O = protoporphyrin IX(out) + ADP + phosphate + H(+). It carries out the reaction coproporphyrin I(in) + ATP + H2O = coproporphyrin I(out) + ADP + phosphate + H(+). The enzyme catalyses uroporphyrin I(in) + ATP + H2O = uroporphyrin I(out) + ADP + phosphate + H(+). The catalysed reaction is uroporphyrin III(in) + ATP + H2O = uroporphyrin III(out) + ADP + phosphate + H(+). Functionally, ATP-dependent transporter that catalyzes the transport of a broad-spectrum of porphyrins from the cytoplasm to the extracellular space through the plasma membrane or into the vesicle lumen. May also function as an ATP-dependent importer of porphyrins from the cytoplasm into the mitochondria, in turn may participate in the de novo heme biosynthesis regulation and in the coordination of heme and iron homeostasis during phenylhydrazine stress. May play a key role in the early steps of melanogenesis producing PMEL amyloid fibrils. In vitro, it confers to cells a resistance to toxic metal such as arsenic and cadmium and against chemotherapeutics agent such as 5-fluorouracil, SN-38 and vincristin. In addition may play a role in the transition metal homeostasis. The chain is ATP-binding cassette sub-family B member 6 from Mus musculus (Mouse).